Reading from the N-terminus, the 82-residue chain is Small ribosomal subunit protein bS18 (82 aa).

Residues 1–20 (MVDINQIPTRRPFHRRRKTC) form a disordered region.

It belongs to the bacterial ribosomal protein bS18 family. As to quaternary structure, part of the 30S ribosomal subunit. Forms a tight heterodimer with protein bS6.

Binds as a heterodimer with protein bS6 to the central domain of the 16S rRNA, where it helps stabilize the platform of the 30S subunit. The polypeptide is Small ribosomal subunit protein bS18 (Chelativorans sp. (strain BNC1)).